Here is a 164-residue protein sequence, read N- to C-terminus: NADH-quinone oxidoreductase subunit I (164 aa).

4Fe-4S ferredoxin-type domains follow at residues 55–85 and 95–124; these read LRRYPNGEERCIACKLCEAICPAQAITIDAE and TRYDIDMTKCIYCGFCQEACPVDAIVEGPN. Cys65, Cys68, Cys71, Cys75, Cys104, Cys107, Cys110, and Cys114 together coordinate [4Fe-4S] cluster.

Belongs to the complex I 23 kDa subunit family. As to quaternary structure, NDH-1 is composed of 14 different subunits. Subunits NuoA, H, J, K, L, M, N constitute the membrane sector of the complex. It depends on [4Fe-4S] cluster as a cofactor.

It is found in the cell inner membrane. The enzyme catalyses a quinone + NADH + 5 H(+)(in) = a quinol + NAD(+) + 4 H(+)(out). In terms of biological role, NDH-1 shuttles electrons from NADH, via FMN and iron-sulfur (Fe-S) centers, to quinones in the respiratory chain. The immediate electron acceptor for the enzyme in this species is believed to be ubiquinone. Couples the redox reaction to proton translocation (for every two electrons transferred, four hydrogen ions are translocated across the cytoplasmic membrane), and thus conserves the redox energy in a proton gradient. This is NADH-quinone oxidoreductase subunit I from Dinoroseobacter shibae (strain DSM 16493 / NCIMB 14021 / DFL 12).